The following is a 261-amino-acid chain: [LysW]-aminoadipate/[LysW]-glutamate kinase (261 aa).

Substrate is bound by residues 35-36, Arg-62, and Asn-166; that span reads GG.

This sequence belongs to the acetylglutamate kinase family. LysZ subfamily.

The protein localises to the cytoplasm. It carries out the reaction [amino-group carrier protein]-C-terminal-N-(1,4-dicarboxybutan-1-yl)-L-glutamine + ATP = [amino-group carrier protein]-C-terminal-N-(1-carboxy-5-phosphooxy-5-oxopentan-1-yl)-L-glutamine + ADP. The enzyme catalyses [amino-group carrier protein]-C-terminal-gamma-(L-glutamyl)-L-glutamate + ATP = [amino-group carrier protein]-C-terminal-gamma-(5-phospho-L-glutamyl)-L-glutamate + ADP. Its pathway is amino-acid biosynthesis; L-lysine biosynthesis via AAA pathway; L-lysine from L-alpha-aminoadipate (Thermus route): step 2/5. The protein operates within amino-acid biosynthesis; L-arginine biosynthesis. Its function is as follows. Involved in both the arginine and lysine biosynthetic pathways. Phosphorylates the LysW-bound precursors glutamate (for arginine biosynthesis), respectively alpha-aminoadipate (for lysine biosynthesis). The polypeptide is [LysW]-aminoadipate/[LysW]-glutamate kinase (Sulfurisphaera tokodaii (strain DSM 16993 / JCM 10545 / NBRC 100140 / 7) (Sulfolobus tokodaii)).